Here is a 310-residue protein sequence, read N- to C-terminus: Ribosomal RNA small subunit methyltransferase H (310 aa).

S-adenosyl-L-methionine-binding positions include 32-34, aspartate 52, phenylalanine 79, aspartate 100, and glutamine 107; that span reads GGH.

It belongs to the methyltransferase superfamily. RsmH family.

It localises to the cytoplasm. The enzyme catalyses cytidine(1402) in 16S rRNA + S-adenosyl-L-methionine = N(4)-methylcytidine(1402) in 16S rRNA + S-adenosyl-L-homocysteine + H(+). Functionally, specifically methylates the N4 position of cytidine in position 1402 (C1402) of 16S rRNA. In Bacillus cereus (strain ATCC 10987 / NRS 248), this protein is Ribosomal RNA small subunit methyltransferase H.